Consider the following 377-residue polypeptide: Succinyl-diaminopimelate desuccinylase (377 aa).

His-66 serves as a coordination point for Zn(2+). The active site involves Asp-68. Asp-99 provides a ligand contact to Zn(2+). The Proton acceptor role is filled by Glu-133. Residues Glu-134, Glu-162, and His-348 each contribute to the Zn(2+) site.

The protein belongs to the peptidase M20A family. DapE subfamily. Homodimer. Requires Zn(2+) as cofactor. Co(2+) serves as cofactor.

It catalyses the reaction N-succinyl-(2S,6S)-2,6-diaminopimelate + H2O = (2S,6S)-2,6-diaminopimelate + succinate. Its pathway is amino-acid biosynthesis; L-lysine biosynthesis via DAP pathway; LL-2,6-diaminopimelate from (S)-tetrahydrodipicolinate (succinylase route): step 3/3. In terms of biological role, catalyzes the hydrolysis of N-succinyl-L,L-diaminopimelic acid (SDAP), forming succinate and LL-2,6-diaminopimelate (DAP), an intermediate involved in the bacterial biosynthesis of lysine and meso-diaminopimelic acid, an essential component of bacterial cell walls. This is Succinyl-diaminopimelate desuccinylase from Bordetella avium (strain 197N).